The chain runs to 90 residues: Cell division topological specificity factor (90 aa).

This sequence belongs to the MinE family.

Prevents the cell division inhibition by proteins MinC and MinD at internal division sites while permitting inhibition at polar sites. This ensures cell division at the proper site by restricting the formation of a division septum at the midpoint of the long axis of the cell. In Pelotomaculum thermopropionicum (strain DSM 13744 / JCM 10971 / SI), this protein is Cell division topological specificity factor.